Consider the following 995-residue polypeptide: tRNA wybutosine-synthesizing protein 2/3/4 (995 aa).

Residues 1–212 (MDFEKRKAAT…GFSVALASNG (212 aa)) are tRNA wybutosine-synthesizing protein 3 homolog. Kelch repeat units lie at residues 284 to 335 (EVIV…MVGD), 336 to 386 (FMFV…SVGT), 387 to 436 (KVYI…AYGS), 437 to 486 (QSFM…VYKH), and 488 to 535 (IGII…SILG). The segment at 661-995 (ERSEENNLTK…RHLVADVRCR (335 aa)) is tRNA wybutosine-synthesizing protein 2 homolog. S-adenosyl-L-methionine contacts are provided by residues lysine 828 and 896–897 (DN).

This sequence in the C-terminal section; belongs to the class I-like SAM-binding methyltransferase superfamily. TRM5/TYW2 family. The protein in the N-terminal section; belongs to the TYW3 family.

It catalyses the reaction 4-demethyl-7-[(3S)-3-amino-3-carboxypropyl]wyosine(37) in tRNA(Phe) + S-adenosyl-L-methionine = 7-[(3S)-3-amino-3-carboxypropyl]wyosine(37) in tRNA(Phe) + S-adenosyl-L-homocysteine + H(+). It carries out the reaction 4-demethylwyosine(37) in tRNA(Phe) + S-adenosyl-L-methionine = 4-demethyl-7-[(3S)-3-amino-3-carboxypropyl]wyosine(37) in tRNA(Phe) + S-methyl-5'-thioadenosine + H(+). It functions in the pathway tRNA modification; wybutosine-tRNA(Phe) biosynthesis. In terms of biological role, S-adenosyl-L-methionine-dependent transferase that acts as a component of the wybutosine biosynthesis pathway. Wybutosine is a hyper modified guanosine with a tricyclic base found at the 3'-position adjacent to the anticodon of eukaryotic phenylalanine tRNA. The polypeptide is tRNA wybutosine-synthesizing protein 2/3/4 (Arabidopsis thaliana (Mouse-ear cress)).